The sequence spans 501 residues: Serine/threonine protein phosphatase 2A 55 kDa regulatory subunit B beta isoform (501 aa).

Residue Met-1 is modified to N-acetylmethionine. 5 WD repeats span residues 34–73 (QEVD…DHGG), 110–151 (EIEE…IKKI), 220–258 (AHDY…QSFN), 269–309 (DLTE…LCDS), and 328–366 (EIIA…GPVA). The segment covering 439–449 (TPARPSRSIGS) has biased composition (polar residues). A disordered region spans residues 439–466 (TPARPSRSIGSMTRVVRRGSESPGTEAN). The stretch at 471–501 (DFTTKLLHMAWHPTENSIACAAANSLYMYYA) is one WD 6 repeat.

This sequence belongs to the phosphatase 2A regulatory subunit B family. In terms of assembly, PP2A consists of a common heteromeric enzyme, composed of a catalytic subunit (subunits C), a constant regulatory subunit (subunit A), and a variety of regulatory subunits such as subunits B (the R2/B/PR55/B55, R3/B''/PR72/PR130/PR59 and R5/B'/B56 families). Interacts with SIC/RON3. As to expression, expressed ubiquitously.

Its function is as follows. The B regulatory subunit may modulate substrate selectivity and catalytic activity, and may also direct the localization of the catalytic enzyme to a particular subcellular compartment. The protein is Serine/threonine protein phosphatase 2A 55 kDa regulatory subunit B beta isoform (PP2AB2) of Arabidopsis thaliana (Mouse-ear cress).